The primary structure comprises 122 residues: Small ribosomal subunit protein uS13 (122 aa).

Positions 93–122 (RLSLPVRGQRTKTNSRTRKGKRKTVAGKKK) are disordered. The segment covering 101-122 (QRTKTNSRTRKGKRKTVAGKKK) has biased composition (basic residues).

The protein belongs to the universal ribosomal protein uS13 family. Part of the 30S ribosomal subunit. Forms a loose heterodimer with protein S19. Forms two bridges to the 50S subunit in the 70S ribosome.

Located at the top of the head of the 30S subunit, it contacts several helices of the 16S rRNA. In the 70S ribosome it contacts the 23S rRNA (bridge B1a) and protein L5 of the 50S subunit (bridge B1b), connecting the 2 subunits; these bridges are implicated in subunit movement. Contacts the tRNAs in the A and P-sites. The chain is Small ribosomal subunit protein uS13 from Chlamydia pneumoniae (Chlamydophila pneumoniae).